Here is a 172-residue protein sequence, read N- to C-terminus: MARFTVLITAVVLAFLMAAPMPGVTAKKYTVGENKFWNPNINYTIWAQGKHFYLGDWLYFVFDRNQHNILEVNKTDYEGCIADHPIRNWTRGAGRDIVTLNQTKHYYLLDGKGGCYGGMKLSVKVEKLPPPPKSAPVKNIGSVSMVTGLAQFMIPVSLFAFPAMWDVISRMW.

The first 26 residues, 1–26, serve as a signal peptide directing secretion; it reads MARFTVLITAVVLAFLMAAPMPGVTA. The Phytocyanin domain maps to 27-127; it reads KKYTVGENKF…GMKLSVKVEK (101 aa). Asn-42, Asn-73, Asn-88, and Asn-101 each carry an N-linked (GlcNAc...) asparagine glycan. Cysteines 80 and 115 form a disulfide. Gly-141 carries GPI-anchor amidated glycine lipidation. Positions 142 to 172 are cleaved as a propeptide — removed in mature form; sequence SVSMVTGLAQFMIPVSLFAFPAMWDVISRMW.

This sequence belongs to the early nodulin-like (ENODL) family.

The protein resides in the cell membrane. Functionally, may act as a carbohydrate transporter. In Arabidopsis thaliana (Mouse-ear cress), this protein is Early nodulin-like protein 17.